A 103-amino-acid chain; its full sequence is Histone H4 (103 aa).

A compositionally biased stretch (gly residues) spans 1–14; sequence MSGRGKGGKGLGKG. The disordered stretch occupies residues 1 to 20; that stretch reads MSGRGKGGKGLGKGGAKRHR. N-acetylserine is present on serine 2. Lysine 17 is modified (N6-acetyllysine). The DNA-binding element occupies 17 to 21; that stretch reads KRHRK. N6-methyllysine is present on lysine 21.

This sequence belongs to the histone H4 family. In terms of assembly, the nucleosome is a histone octamer containing two molecules each of H2A, H2B, H3 and H4 assembled in one H3-H4 heterotetramer and two H2A-H2B heterodimers. The octamer wraps approximately 147 bp of DNA.

It localises to the nucleus. The protein localises to the chromosome. In terms of biological role, core component of nucleosome. Nucleosomes wrap and compact DNA into chromatin, limiting DNA accessibility to the cellular machineries which require DNA as a template. Histones thereby play a central role in transcription regulation, DNA repair, DNA replication and chromosomal stability. DNA accessibility is regulated via a complex set of post-translational modifications of histones, also called histone code, and nucleosome remodeling. This Pyrenomonas salina protein is Histone H4.